The primary structure comprises 123 residues: Small ribosomal subunit protein uS12cz/uS12cy (123 aa).

The protein belongs to the universal ribosomal protein uS12 family. Part of the 30S ribosomal subunit.

It localises to the plastid. The protein resides in the chloroplast. Functionally, with S4 and S5 plays an important role in translational accuracy. Located at the interface of the 30S and 50S subunits. The polypeptide is Small ribosomal subunit protein uS12cz/uS12cy (rps12-A) (Psilotum nudum (Whisk fern)).